Here is a 557-residue protein sequence, read N- to C-terminus: Dihydroxy-acid dehydratase (557 aa).

A [2Fe-2S] cluster-binding site is contributed by cysteine 50. Aspartate 82 is a binding site for Mg(2+). A [2Fe-2S] cluster-binding site is contributed by cysteine 123. The Mg(2+) site is built by aspartate 124 and lysine 125. The residue at position 125 (lysine 125) is an N6-carboxylysine. Position 195 (cysteine 195) interacts with [2Fe-2S] cluster. A Mg(2+)-binding site is contributed by glutamate 447. Residue serine 473 is the Proton acceptor of the active site.

Belongs to the IlvD/Edd family. Homodimer. [2Fe-2S] cluster serves as cofactor. It depends on Mg(2+) as a cofactor.

It catalyses the reaction (2R)-2,3-dihydroxy-3-methylbutanoate = 3-methyl-2-oxobutanoate + H2O. The catalysed reaction is (2R,3R)-2,3-dihydroxy-3-methylpentanoate = (S)-3-methyl-2-oxopentanoate + H2O. It functions in the pathway amino-acid biosynthesis; L-isoleucine biosynthesis; L-isoleucine from 2-oxobutanoate: step 3/4. Its pathway is amino-acid biosynthesis; L-valine biosynthesis; L-valine from pyruvate: step 3/4. Its function is as follows. Functions in the biosynthesis of branched-chain amino acids. Catalyzes the dehydration of (2R,3R)-2,3-dihydroxy-3-methylpentanoate (2,3-dihydroxy-3-methylvalerate) into 2-oxo-3-methylpentanoate (2-oxo-3-methylvalerate) and of (2R)-2,3-dihydroxy-3-methylbutanoate (2,3-dihydroxyisovalerate) into 2-oxo-3-methylbutanoate (2-oxoisovalerate), the penultimate precursor to L-isoleucine and L-valine, respectively. This Burkholderia pseudomallei (strain 1710b) protein is Dihydroxy-acid dehydratase.